Here is a 205-residue protein sequence, read N- to C-terminus: Thymidylate kinase (205 aa).

Residue 11–18 (GVEGAGKS) coordinates ATP.

Belongs to the thymidylate kinase family.

The enzyme catalyses dTMP + ATP = dTDP + ADP. In terms of biological role, phosphorylation of dTMP to form dTDP in both de novo and salvage pathways of dTTP synthesis. This chain is Thymidylate kinase, found in Vesicomyosocius okutanii subsp. Calyptogena okutanii (strain HA).